The chain runs to 152 residues: Superoxide dismutase [Cu-Zn] 2 (152 aa).

3 residues coordinate Cu cation: His45, His47, and His62. Residues 53–81 form a disordered region; it reads TNGSMSTGPHFNPDGKQHGAPEDANRHAG. Residues His62, His70, His79, and Asp82 each coordinate Zn(2+). Residues 65–81 show a composition bias toward basic and acidic residues; it reads PDGKQHGAPEDANRHAG. His119 provides a ligand contact to Cu cation.

The protein belongs to the Cu-Zn superoxide dismutase family. As to quaternary structure, homodimer. Requires Cu cation as cofactor. It depends on Zn(2+) as a cofactor.

It localises to the cytoplasm. The catalysed reaction is 2 superoxide + 2 H(+) = H2O2 + O2. Its function is as follows. Destroys radicals which are normally produced within the cells and which are toxic to biological systems. The polypeptide is Superoxide dismutase [Cu-Zn] 2 (SODCC2) (Brassica juncea (Indian mustard)).